We begin with the raw amino-acid sequence, 558 residues long: Atlastin-1 (558 aa).

The segment at 1–28 (MAKNRRDRNSWGGFSEKTYEWSSEEEEP) is disordered. The N-terminal hypervariable region (HVR) stretch occupies residues 1–34 (MAKNRRDRNSWGGFSEKTYEWSSEEEEPVKKAGP). Residues 1–449 (MAKNRRDRNS…NIFHAARTPA (449 aa)) lie on the Cytoplasmic side of the membrane. Residues serine 10, serine 22, and serine 23 each carry the phosphoserine modification. The region spanning 64–309 (DKEVVAVSVA…LIPWLLSPES (246 aa)) is the GB1/RHD3-type G domain. GDP is bound by residues arginine 77, lysine 78, glycine 79, lysine 80, serine 81, phenylalanine 82, glutamine 148, arginine 217, aspartate 218, valine 276, and asparagine 279. Arginine 77, lysine 78, glycine 79, lysine 80, serine 81, and phenylalanine 82 together coordinate GTP. Serine 81 provides a ligand contact to Mg(2+). Residues arginine 217, aspartate 218, and valine 276 each contribute to the GTP site. The segment at 347–438 (MLQATAEANN…YIQYIKHNDS (92 aa)) is 3HB (three-helix bundle) domain. Lysine 395 bears the N6-acetyllysine mark. Residues 418 to 439 (LQQLETEIDELYIQYIKHNDSK) are a coiled coil. A linker region spans residues 439–447 (KNIFHAART). The chain crosses the membrane as a helical span at residues 450–470 (TLFVVIFITYVIAGVTGFIGL). Position 471 (aspartate 471) is a topological domain, lumenal. Residues 472–492 (IIASLCNMIMGLTLITLCTWA) traverse the membrane as a helical segment. At 493–558 (YIRYSGEYRE…STEQSEKKKM (66 aa)) the chain is on the cytoplasmic side. An autoinhibitory domain region spans residues 521 to 558 (NEALYKLYSAAATHRHLYHQAFPAPKSESTEQSEKKKM).

Belongs to the TRAFAC class dynamin-like GTPase superfamily. GB1/RHD3 GTPase family. GB1 subfamily. Monomeric and homodimeric. The homodimer, transiently formed by two molecules on opposing membranes, is the active form mediating ER membrane fusion. Interacts with REEP1, REEP5, RTN3 and RTN4 (via the transmembrane region); these proteins are involved in endoplasmic reticulum tubular network organization. Interacts with ZFYVE27; both proteins are involved in endoplasmic reticulum tubular network organization. Interacts with ARL6IP1; both proteins are involved in endoplasmic reticulum tubular network organization. Interacts with SPAST; the interaction is direct, could recruit SPAST to Golgi membranes. Interacts (via N-terminal region) with MAP4K4 (via CNH regulatory domain). May interact with TMED2. Interacts with CPT1C. Post-translationally, phosphorylated. Phosphorylation, by different kinases, of the N-terminal hypervariable region (HVR) regulates the ATL1-mediated membrane tethering step.

The protein resides in the endoplasmic reticulum membrane. Its subcellular location is the golgi apparatus membrane. The protein localises to the cell projection. It is found in the axon. It catalyses the reaction GTP + H2O = GDP + phosphate + H(+). Its function is as follows. Atlastin-1 (ATL1) is a membrane-anchored GTPase that mediates the GTP-dependent fusion of endoplasmic reticulum (ER) membranes, maintaining the continuous ER network. It facilitates the formation of three-way junctions where ER tubules intersect. Two atlastin-1 on neighboring ER tubules bind GTP and form loose homodimers through the GB1/RHD3-type G domains and 3HB regions. Upon GTP hydrolysis, the 3HB regions tighten, pulling the membranes together to drive their fusion. After fusion, the homodimer disassembles upon release of inorganic phosphate (Pi). Subsequently, GDP dissociates, resetting the monomers to a conformation ready for a new fusion cycle. May also regulate more or less directly Golgi biogenesis. Indirectly regulates axonal development. This Bos taurus (Bovine) protein is Atlastin-1.